The following is a 507-amino-acid chain: RNA-splicing ligase RtcB homolog (507 aa).

Mn(2+) is bound by residues D121, C124, H229, H261, and H355. A GMP-binding site is contributed by 228 to 232 (NHYAE). GMP-binding positions include 355–356 (HN), 404–407 (GGTM), S411, 430–433 (HGAG), and K506. H430 acts as the GMP-histidine intermediate in catalysis.

It belongs to the RtcB family. In terms of assembly, catalytic component of the tRNA-splicing ligase complex. Mn(2+) serves as cofactor.

The enzyme catalyses a 3'-end 3'-phospho-ribonucleotide-RNA + a 5'-end dephospho-ribonucleoside-RNA + GTP = a ribonucleotidyl-ribonucleotide-RNA + GMP + diphosphate. The catalysed reaction is a 3'-end 2',3'-cyclophospho-ribonucleotide-RNA + a 5'-end dephospho-ribonucleoside-RNA + GTP + H2O = a ribonucleotidyl-ribonucleotide-RNA + GMP + diphosphate + H(+). In terms of biological role, catalytic subunit of the tRNA-splicing ligase complex that acts by directly joining spliced tRNA halves to mature-sized tRNAs by incorporating the precursor-derived splice junction phosphate into the mature tRNA as a canonical 3',5'-phosphodiester. May act as an RNA ligase with broad substrate specificity, and may function toward other RNAs. This Micromonas pusilla (strain CCMP1545) (Picoplanktonic green alga) protein is RNA-splicing ligase RtcB homolog.